Reading from the N-terminus, the 280-residue chain is MQKKIETVKTLLDSLPFIRKFYGKTIVIKYGGSAQIDERLKESFAIDILMLYMVGIKPVIVHGGGKRITEILTALNVKTEFKDGVRVTTAESIKIAEMVLSGEINKEIVNMLNQHGAKAIGINGKDMSFMKAKSLVGYTGEITSIDGVFVNKLLSESLIPVIAPIAAGDSATHPGYNINADTAASEIAAAIDAKRVIFLTDTPGVLDKGKNLISSLTKEEIEKLKQDGTIAGGMIPKVDAALRAVERGVEKAHIIDGRIEHSILLELLTSEGIGTEIKES.

Substrate contacts are provided by residues 64 to 65, Arg-86, and Asn-177; that span reads GG.

The protein belongs to the acetylglutamate kinase family. ArgB subfamily.

It is found in the cytoplasm. It catalyses the reaction N-acetyl-L-glutamate + ATP = N-acetyl-L-glutamyl 5-phosphate + ADP. It functions in the pathway amino-acid biosynthesis; L-arginine biosynthesis; N(2)-acetyl-L-ornithine from L-glutamate: step 2/4. Its function is as follows. Catalyzes the ATP-dependent phosphorylation of N-acetyl-L-glutamate. The chain is Acetylglutamate kinase from Nautilia profundicola (strain ATCC BAA-1463 / DSM 18972 / AmH).